We begin with the raw amino-acid sequence, 548 residues long: 5-aminolevulinate synthase, mitochondrial (548 aa).

A mitochondrion-targeting transit peptide spans 1-22 (MQRSIFARFGNSSAAVSTLNRL). Residues R91, S204, and K223 each coordinate substrate. 3 residues coordinate pyridoxal 5'-phosphate: S256, H284, and T334. Residue K337 is part of the active site. N6-(pyridoxal phosphate)lysine is present on K337. 2 residues coordinate pyridoxal 5'-phosphate: T366 and T367. Position 452 (T452) interacts with substrate.

The protein belongs to the class-II pyridoxal-phosphate-dependent aminotransferase family. As to quaternary structure, homodimer. Interacts with MCX1. Pyridoxal 5'-phosphate is required as a cofactor.

The protein localises to the mitochondrion matrix. The catalysed reaction is succinyl-CoA + glycine + H(+) = 5-aminolevulinate + CO2 + CoA. The protein operates within porphyrin-containing compound metabolism; protoporphyrin-IX biosynthesis; 5-aminolevulinate from glycine: step 1/1. Its activity is regulated as follows. Ihnhibited by hemin. In terms of biological role, catalyzes the synthesis of 5-aminolevulinate (ALA) from succinyl-CoA and glycine, the first and rate-limiting step in heme biosynthesis. In Saccharomyces cerevisiae (strain ATCC 204508 / S288c) (Baker's yeast), this protein is 5-aminolevulinate synthase, mitochondrial.